A 568-amino-acid chain; its full sequence is Potassium-transporting ATPase potassium-binding subunit (568 aa).

The next 10 membrane-spanning stretches (helical) occupy residues 1–21 (MWLT…LAVP), 60–80 (GLAL…LLRA), 129–149 (AITF…AGFI), 174–194 (VMLP…VPQA), 251–271 (IHIL…GSML), 278–298 (WVLF…VFTA), 381–401 (VGLI…GMMI), 420–440 (VMLA…LAAV), 488–508 (IGLA…ALAG), and 528–548 (PLFM…TFLP).

It belongs to the KdpA family. In terms of assembly, the system is composed of three essential subunits: KdpA, KdpB and KdpC.

It localises to the cell inner membrane. Functionally, part of the high-affinity ATP-driven potassium transport (or Kdp) system, which catalyzes the hydrolysis of ATP coupled with the electrogenic transport of potassium into the cytoplasm. This subunit binds the periplasmic potassium ions and delivers the ions to the membrane domain of KdpB through an intramembrane tunnel. This is Potassium-transporting ATPase potassium-binding subunit from Delftia acidovorans (strain DSM 14801 / SPH-1).